The chain runs to 335 residues: Glucokinase (335 aa).

An ATP-binding site is contributed by 11–16; the sequence is ADIGGT.

The protein belongs to the bacterial glucokinase family.

The protein localises to the cytoplasm. The enzyme catalyses D-glucose + ATP = D-glucose 6-phosphate + ADP + H(+). This Xanthomonas axonopodis pv. citri (strain 306) protein is Glucokinase.